Consider the following 638-residue polypeptide: Chaperone protein DnaK (638 aa).

Thr-198 carries the phosphothreonine; by autocatalysis modification. Residues 602–638 (QAKSQAQGGEEAQAKDAGQSNDDVVDAEFEEVKDDKK) are disordered. Positions 624-638 (DVVDAEFEEVKDDKK) are enriched in acidic residues.

Belongs to the heat shock protein 70 family.

Acts as a chaperone. The polypeptide is Chaperone protein DnaK (Shewanella denitrificans (strain OS217 / ATCC BAA-1090 / DSM 15013)).